The chain runs to 1160 residues: DNA polymerase III subunit alpha (1160 aa).

The protein resides in the cytoplasm. The catalysed reaction is DNA(n) + a 2'-deoxyribonucleoside 5'-triphosphate = DNA(n+1) + diphosphate. Functionally, DNA polymerase III is a complex, multichain enzyme responsible for most of the replicative synthesis in bacteria. This DNA polymerase also exhibits 3' to 5' exonuclease activity. The alpha chain is the DNA polymerase. This Escherichia coli O6:H1 (strain CFT073 / ATCC 700928 / UPEC) protein is DNA polymerase III subunit alpha (dnaE).